The sequence spans 164 residues: MMHLLADPETWVAIAFVILMGLFAYLGVHRMVLKALDHRADRIRDELAEAKRLKDEAAKVLADYKTRRASAEREAEEIVTSAKAEAERIAADAKAKMEDFVARRTKAAESKIALAEAQALADVRAAAAEAAVQAAATVLSQSVKGGLGDDLVAKGIAEVSRKLN.

Residues 8-28 form a helical membrane-spanning segment; it reads PETWVAIAFVILMGLFAYLGV.

Belongs to the ATPase B chain family. As to quaternary structure, F-type ATPases have 2 components, F(1) - the catalytic core - and F(0) - the membrane proton channel. F(1) has five subunits: alpha(3), beta(3), gamma(1), delta(1), epsilon(1). F(0) has three main subunits: a(1), b(2) and c(10-14). The alpha and beta chains form an alternating ring which encloses part of the gamma chain. F(1) is attached to F(0) by a central stalk formed by the gamma and epsilon chains, while a peripheral stalk is formed by the delta and b chains.

The protein resides in the cell inner membrane. F(1)F(0) ATP synthase produces ATP from ADP in the presence of a proton or sodium gradient. F-type ATPases consist of two structural domains, F(1) containing the extramembraneous catalytic core and F(0) containing the membrane proton channel, linked together by a central stalk and a peripheral stalk. During catalysis, ATP synthesis in the catalytic domain of F(1) is coupled via a rotary mechanism of the central stalk subunits to proton translocation. In terms of biological role, component of the F(0) channel, it forms part of the peripheral stalk, linking F(1) to F(0). The polypeptide is ATP synthase subunit b 1 (Bradyrhizobium sp. (strain ORS 278)).